Reading from the N-terminus, the 37-residue chain is Chitinase-like protein (37 aa).

The disordered stretch occupies residues 1–20; that stretch reads VLLSVGGDADTESPEKKNLG. A GH18 domain is found at 1–37; sequence VLLSVGGDADTESPEKKNLGGVSIVDLSMDDFRGLLT.

It belongs to the glycosyl hydrolase 18 family. IDGF subfamily. Post-translationally, glycosylated.

The protein resides in the secreted. In terms of biological role, cooperates with insulin-like peptides to stimulate the proliferation, polarization and motility of imaginal disk cells. May act by stabilizing the binding of insulin-like peptides to its receptor through a simultaneous interaction with both molecules to form a multiprotein signaling complex. In Heliothis virescens (Tobacco budworm moth), this protein is Chitinase-like protein.